The following is a 139-amino-acid chain: MKKGTVLNSDISSMISRLGHTDTLVVCDAGLPIPKSTTRIDMALTQGVPSFMQVLGVVTNEMQVEAAIIAEEIKQHNPQLHETLLTHLEQLQKHQGNTIEIRYTTHEQFKQQTAESQAVIRSGECSPYANIILCAGVTF.

Catalysis depends on His-20, which acts as the Proton donor. Substrate contacts are provided by residues Asp-28, His-106, and 128–130; that span reads YAN.

This sequence belongs to the RbsD / FucU family. RbsD subfamily. In terms of assembly, homodecamer.

It localises to the cytoplasm. The enzyme catalyses beta-D-ribopyranose = beta-D-ribofuranose. It functions in the pathway carbohydrate metabolism; D-ribose degradation; D-ribose 5-phosphate from beta-D-ribopyranose: step 1/2. Catalyzes the interconversion of beta-pyran and beta-furan forms of D-ribose. In Escherichia coli O139:H28 (strain E24377A / ETEC), this protein is D-ribose pyranase.